Here is a 229-residue protein sequence, read N- to C-terminus: Large ribosomal subunit protein uL1 (229 aa).

It belongs to the universal ribosomal protein uL1 family. Part of the 50S ribosomal subunit.

Binds directly to 23S rRNA. The L1 stalk is quite mobile in the ribosome, and is involved in E site tRNA release. In terms of biological role, protein L1 is also a translational repressor protein, it controls the translation of the L11 operon by binding to its mRNA. In Streptococcus equi subsp. equi (strain 4047), this protein is Large ribosomal subunit protein uL1.